Consider the following 234-residue polypeptide: PHD finger protein ING1 (234 aa).

The tract at residues 129-166 is disordered; that stretch reads NNGKAGNAGEGGRGGRKKTRLATAASTAAASTGMTSSN. The span at 149–165 shows a compositional bias: low complexity; that stretch reads LATAASTAAASTGMTSS. Residues 178 to 227 form a PHD-type zinc finger; that stretch reads PTYCICNQVSFGEMVACDNNACKIEWFHFGCVGLKEQPKGKWYCPECATV. Residues cysteine 181, cysteine 183, cysteine 194, cysteine 199, histidine 205, cysteine 208, cysteine 221, and cysteine 224 each coordinate Zn(2+).

It belongs to the ING family. In terms of assembly, interacts with H3K4me3 and to a lesser extent with H3K4me2. As to expression, ubiquitously expressed.

The protein resides in the nucleus. Histone-binding component that specifically recognizes H3 tails trimethylated on 'Lys-4' (H3K4me3), which mark transcription start sites of virtually all active genes. This is PHD finger protein ING1 (ING1) from Arabidopsis thaliana (Mouse-ear cress).